Reading from the N-terminus, the 74-residue chain is uncharacterized protein (74 aa).

The segment at 35–59 (CEECDAPIPAARRAAYPSATRCVSC) adopts a dksA C4-type zinc-finger fold.

This is an uncharacterized protein from Enterobacteriaceae (Bacteriophage P2).